The sequence spans 449 residues: Cyclin-B1-1 (449 aa).

Disordered stretches follow at residues 1 to 34 and 90 to 143; these read MATRSQNVAAAPQPPQNRGNVAALGKQKAVVAGR and AVAP…SVRK. 2 stretches are compositionally biased toward low complexity: residues 90–102 and 121–134; these read AVAPAAVARPAQR and EISSDSDQSMRQQS.

This sequence belongs to the cyclin family. Cyclin AB subfamily.

This is Cyclin-B1-1 (CYCB1-1) from Oryza sativa subsp. japonica (Rice).